A 3707-amino-acid chain; its full sequence is CUB and sushi domain-containing protein 3 (3707 aa).

A disordered region spans residues 1-21 (MKGIRKGESRAKESKPWEPGK). Topologically, residues 1 to 42 (MKGIRKGESRAKESKPWEPGKRRCAKCGRLDFILMKKMGIKS) are cytoplasmic. A helical transmembrane segment spans residues 43–63 (GFTFWNLVFLLTVSCVKGFIY). Residues 64–3630 (TCGGTLKGLN…NQPHGTNSSS (3567 aa)) lie on the Extracellular side of the membrane. 4 cysteine pairs are disulfide-bonded: Cys-65/Cys-91, Cys-178/Cys-218, Cys-204/Cys-235, and Cys-241/Cys-267. The region spanning 65-173 (CGGTLKGLNG…HGFKVYYEEL (109 aa)) is the CUB 1 domain. 2 N-linked (GlcNAc...) asparagine glycosylation sites follow: Asn-73 and Asn-90. The 62-residue stretch at 176-237 (SSCGNPGVPP…WDFPVPICRA (62 aa)) folds into the Sushi 1 domain. The CUB 2 domain occupies 241–345 (CGGTMRGSSG…RGFSAPYQGS (105 aa)). Residues Asn-361 and Asn-409 are each glycosylated (N-linked (GlcNAc...) asparagine). Residues 394 to 435 (QRVQVTSLRNSGLDPNTSKDGLSPHPADTQSTRRRPRHAEQI) are disordered. The segment covering 396–413 (VQVTSLRNSGLDPNTSKD) has biased composition (polar residues). One can recognise a Sushi 2 domain in the interval 484–545 (NLCPDPGEPE…WSDHRPVCKV (62 aa)). Intrachain disulfides connect Cys-486–Cys-526, Cys-512–Cys-543, Cys-548–Cys-574, Cys-664–Cys-704, Cys-690–Cys-717, and Cys-721–Cys-747. Positions 548–659 (CGSNLQGPSG…VGFKVNYKEI (112 aa)) constitute a CUB 3 domain. The Sushi 3 domain occupies 662–719 (ESCGDPGTPLYGIREGDGFSNRDVLRFECQFGFELIGEKSIVCQENNQWSANIPICIF). One can recognise a CUB 4 domain in the interval 721–829 (CLSNFTAPMG…RGFNITYNTF (109 aa)). Asn-724 and Asn-823 each carry an N-linked (GlcNAc...) asparagine glycan. A Sushi 4 domain is found at 832–893 (NECPDPGIPI…WSGLIPKCGA (62 aa)). Intrachain disulfides connect Cys-834–Cys-875, Cys-860–Cys-891, and Cys-895–Cys-921. Residues 895–1003 (CGGHFSAPSG…NGFKIHYESV (109 aa)) form the CUB 5 domain. N-linked (GlcNAc...) asparagine glycosylation is present at Asn-966. In terms of domain architecture, Sushi 5 spans 1008 to 1065 (YSCLDPGIPVHGRRYGHDFSIGSTVSFSCDSGYRLSHEEPLLCEKNHWWSHPLPTCDA). 3 disulfides stabilise this stretch: Cys-1010/Cys-1050, Cys-1036/Cys-1063, and Cys-1067/Cys-1093. Positions 1067–1177 (CGGDVRGPSG…EGFNITFSEY (111 aa)) constitute a CUB 6 domain. N-linked (GlcNAc...) asparagine glycosylation is found at Asn-1092, Asn-1126, and Asn-1171. Residues 1180–1239 (EPCEDPGIPQYGSRIGFNFGIGDTLTFSCSSGYRLEGTSEIICLGGGRRVWSAPLPRCVA) form the Sushi 6 domain. Intrachain disulfides connect Cys-1182–Cys-1222, Cys-1208–Cys-1237, and Cys-1241–Cys-1267. The region spanning 1241 to 1349 (CGASATNNEG…EGFQLVYTSF (109 aa)) is the CUB 7 domain. Asn-1280 carries an N-linked (GlcNAc...) asparagine glycan. In terms of domain architecture, Sushi 7 spans 1352 to 1412 (SHCEDPGIPQ…WDYPLPSCIA (61 aa)). Disulfide bonds link Cys-1354–Cys-1395, Cys-1381–Cys-1410, Cys-1414–Cys-1441, Cys-1528–Cys-1568, Cys-1554–Cys-1584, Cys-1588–Cys-1614, Cys-1701–Cys-1741, Cys-1727–Cys-1758, Cys-1762–Cys-1788, Cys-1878–Cys-1918, Cys-1904–Cys-1935, and Cys-1939–Cys-1965. Positions 1414–1523 (CGGRFKGESS…SGFAIQFSSS (110 aa)) constitute a CUB 8 domain. The Sushi 8 domain maps to 1526 to 1586 (TACRDPGVPM…WQPSPPVCIA (61 aa)). N-linked (GlcNAc...) asparagine glycosylation occurs at Asn-1536. In terms of domain architecture, CUB 9 spans 1588–1696 (CGGNLTGSSG…TGFHLEYKAK (109 aa)). Asn-1591 and Asn-1709 each carry an N-linked (GlcNAc...) asparagine glycan. Residues 1699–1760 (ESCFDPGNIM…WNRALPSCHA (62 aa)) enclose the Sushi 9 domain. The region spanning 1762–1870 (CGSRSTGSEG…KGFHFVYQAV (109 aa)) is the CUB 10 domain. N-linked (GlcNAc...) asparagine glycosylation is present at Asn-1781. In terms of domain architecture, Sushi 10 spans 1876–1937 (TQCSSVPEPR…WNDSLPTCIV (62 aa)). N-linked (GlcNAc...) asparagine glycosylation is present at Asn-1929. In terms of domain architecture, CUB 11 spans 1939–2047 (CGGILTKRKG…AGFHLEYTAI (109 aa)). An N-linked (GlcNAc...) asparagine glycan is attached at Asn-2019. A Sushi 11 domain is found at 2050 to 2109 (DSCPEPQTPSSGIKIGDRYMVGDVVSFQCDQGYSLQGHSHITCMPGPVRRWNYPIPICLA). 3 disulfides stabilise this stretch: Cys-2052–Cys-2092, Cys-2078–Cys-2107, and Cys-2111–Cys-2137. The CUB 12 domain occupies 2111–2219 (CGGAMSDFSG…QGFHIVYQAY (109 aa)). N-linked (GlcNAc...) asparagine glycosylation occurs at Asn-2155. The 60-residue stretch at 2222–2281 (QSCPDPRPFRNGFVIGNDFTVGQTISFECFPGYTLIGNSALTCLHGVSRNWNHPLPRCEA) folds into the Sushi 12 domain. 3 cysteine pairs are disulfide-bonded: Cys-2224–Cys-2264, Cys-2250–Cys-2279, and Cys-2283–Cys-2309. One can recognise a CUB 13 domain in the interval 2283-2394 (CGGNITAMNG…LSYHAYQLRV (112 aa)). 3 N-linked (GlcNAc...) asparagine glycosylation sites follow: Asn-2286, Asn-2291, and Asn-2324. The region spanning 2393–2454 (RVCQPPPPVP…MDGAPPVCQV (62 aa)) is the Sushi 13 domain. 3 disulfide bridges follow: Cys-2395–Cys-2437, Cys-2423–Cys-2452, and Cys-2456–Cys-2484. The 112-residue stretch at 2456–2567 (CPANELRLDS…KGFRIRYIAF (112 aa)) folds into the CUB 14 domain. N-linked (GlcNAc...) asparagine glycans are attached at residues Asn-2495 and Asn-2537. 15 consecutive Sushi domains span residues 2567–2629 (FYCS…ACQA), 2630–2691 (ISCG…RCVV), 2692–2756 (VTCP…YCQI), 2757–2814 (ISCG…RCLA), 2815–2872 (GHCG…SCVP), 2873–2930 (VSCG…MCKV), 2931–2992 (VNCS…ECIM), 2993–3050 (IDCG…HCSG), 3054–3111 (GTCG…ECKA), 3112–3170 (VQCG…NCTI), 3171–3230 (ISCG…TCRA), 3231–3288 (VTCP…QCLP), 3289–3346 (KFCG…HCIE), 3350–3408 (TSCE…ECIP), and 3409–3468 (HSCK…ICEA). 12 disulfides stabilise this stretch: Cys-2569–Cys-2610, Cys-2596–Cys-2627, Cys-2632–Cys-2674, Cys-2658–Cys-2689, Cys-2694–Cys-2739, Cys-2725–Cys-2754, Cys-2759–Cys-2799, Cys-2785–Cys-2812, Cys-2817–Cys-2857, Cys-2843–Cys-2870, Cys-2875–Cys-2915, and Cys-2901–Cys-2928. N-linked (GlcNAc...) asparagine glycosylation is found at Asn-2711 and Asn-2742. Asn-2862 carries N-linked (GlcNAc...) asparagine glycosylation. Residues Asn-2932 and Asn-2952 are each glycosylated (N-linked (GlcNAc...) asparagine). 18 cysteine pairs are disulfide-bonded: Cys-2933-Cys-2977, Cys-2963-Cys-2990, Cys-2995-Cys-3035, Cys-3021-Cys-3048, Cys-3056-Cys-3096, Cys-3082-Cys-3109, Cys-3114-Cys-3155, Cys-3141-Cys-3168, Cys-3173-Cys-3215, Cys-3199-Cys-3228, Cys-3233-Cys-3273, Cys-3259-Cys-3286, Cys-3291-Cys-3331, Cys-3317-Cys-3344, Cys-3352-Cys-3393, Cys-3379-Cys-3406, Cys-3411-Cys-3453, and Cys-3438-Cys-3466. N-linked (GlcNAc...) asparagine glycosylation occurs at Asn-3099. 5 N-linked (GlcNAc...) asparagine glycosylation sites follow: Asn-3158, Asn-3167, Asn-3194, Asn-3208, and Asn-3218. Asn-3276 is a glycosylation site (N-linked (GlcNAc...) asparagine). N-linked (GlcNAc...) asparagine glycosylation occurs at Asn-3364. Residues Asn-3522, Asn-3529, Asn-3612, Asn-3618, and Asn-3627 are each glycosylated (N-linked (GlcNAc...) asparagine). Residues 3631-3651 (VAIAILVPFFALIFAGFGFYL) traverse the membrane as a helical segment. The Cytoplasmic portion of the chain corresponds to 3652 to 3707 (YKQRTAPKTQYTGCSVHENNNGQAAFENPMYDTNAKSVEGKAVRFDPNLNTVCTMV).

It belongs to the CSMD family. As to expression, weakly expressed in most tissues, except in brain. Expressed at intermediate level in brain, including cerebellum, substantia nigra, thalamus, spinal cord, hippocampus and fetal brain. Also expressed in testis.

It is found in the cell membrane. Its function is as follows. Involved in dendrite development. This is CUB and sushi domain-containing protein 3 (CSMD3) from Homo sapiens (Human).